A 401-amino-acid polypeptide reads, in one-letter code: Phosphoglycerate kinase (401 aa).

Residues 20–22 (DFN), Arg-35, 58–61 (HLGR), Arg-117, and Arg-154 contribute to the substrate site. ATP is bound by residues Lys-204, Gly-298, Glu-329, and 358 to 361 (GGDS).

It belongs to the phosphoglycerate kinase family. As to quaternary structure, monomer.

Its subcellular location is the cytoplasm. It catalyses the reaction (2R)-3-phosphoglycerate + ATP = (2R)-3-phospho-glyceroyl phosphate + ADP. It participates in carbohydrate degradation; glycolysis; pyruvate from D-glyceraldehyde 3-phosphate: step 2/5. The chain is Phosphoglycerate kinase from Bifidobacterium longum (strain DJO10A).